A 116-amino-acid chain; its full sequence is Large ribosomal subunit protein bL19 (116 aa).

Belongs to the bacterial ribosomal protein bL19 family.

Its function is as follows. This protein is located at the 30S-50S ribosomal subunit interface and may play a role in the structure and function of the aminoacyl-tRNA binding site. In Nocardioides sp. (strain ATCC BAA-499 / JS614), this protein is Large ribosomal subunit protein bL19.